Reading from the N-terminus, the 390-residue chain is Chitinase-3-like protein 2 (390 aa).

Positions 1–26 (MGATTMDQKSLWAGVVVLLLLQGGSA) are cleaved as a signal peptide. In terms of domain architecture, GH18 spans 27–390 (YKLVCYFTNW…QAVKRSLGSL (364 aa)). Cys31 and Cys56 are disulfide-bonded. Asn35 carries N-linked (GlcNAc...) asparagine glycosylation. Residues 75–76 (DK), 102–105 (GGYL), Tyr104, Tyr146, 210–213 (LSFD), Asp213, and Trp360 each bind chitin.

This sequence belongs to the glycosyl hydrolase 18 family. In terms of tissue distribution, highest expression in chondrocytes, followed by synoviocytes, lung and heart. Not detected in spleen, pancreas, and liver. May also be expressed in developing brain and placenta.

Its subcellular location is the secreted. In terms of biological role, lectin that binds chitooligosaccharides and other glycans with high affinity, but not heparin. Has no chitinase activity. This Homo sapiens (Human) protein is Chitinase-3-like protein 2 (CHI3L2).